The chain runs to 365 residues: Spermidine/putrescine import ATP-binding protein PotA (365 aa).

One can recognise an ABC transporter domain in the interval leucine 7 to isoleucine 237. Glycine 39–threonine 46 serves as a coordination point for ATP.

The protein belongs to the ABC transporter superfamily. Spermidine/putrescine importer (TC 3.A.1.11.1) family. The complex is composed of two ATP-binding proteins (PotA), two transmembrane proteins (PotB and PotC) and a solute-binding protein (PotD).

It is found in the cell inner membrane. The enzyme catalyses ATP + H2O + polyamine-[polyamine-binding protein]Side 1 = ADP + phosphate + polyamineSide 2 + [polyamine-binding protein]Side 1.. In terms of biological role, part of the ABC transporter complex PotABCD involved in spermidine/putrescine import. Responsible for energy coupling to the transport system. This Hahella chejuensis (strain KCTC 2396) protein is Spermidine/putrescine import ATP-binding protein PotA.